Here is a 433-residue protein sequence, read N- to C-terminus: N-lysine methyltransferase SMYD2 (433 aa).

The SET domain occupies 7–241 (GGLERFCSPG…PGEEVFTSYI (235 aa)). Position 17–19 (17–19 (KGR)) interacts with S-adenosyl-L-methionine. The Zn(2+) site is built by Cys-52, Cys-55, Cys-65, Cys-68, Cys-74, Cys-78, His-86, and Cys-90. An MYND-type zinc finger spans residues 52–90 (CEFCFARKEGLSKCGRCKQAFYCNVECQREDWPMHKLEC). S-adenosyl-L-methionine-binding positions include His-137, 206–207 (NH), and 258–260 (YFF).

The protein belongs to the class V-like SAM-binding methyltransferase superfamily. Interacts with RNA polymerase II and HELZ. Interacts with SIN3A and HDAC1. Interacts (via MYND-type zinc finger) with EPB41L3. Interacts (via SET domain) with p53/TP53. Interacts with RB1 and HSP90AA1.

The protein resides in the cytoplasm. Its subcellular location is the cytosol. It is found in the nucleus. The catalysed reaction is L-lysyl(4)-[histone H3] + 3 S-adenosyl-L-methionine = N(6),N(6),N(6)-trimethyl-L-lysyl(4)-[histone H3] + 3 S-adenosyl-L-homocysteine + 3 H(+). It catalyses the reaction L-lysyl-[protein] + S-adenosyl-L-methionine = N(6)-methyl-L-lysyl-[protein] + S-adenosyl-L-homocysteine + H(+). Protein-lysine N-methyltransferase that methylates both histones and non-histone proteins, including p53/TP53 and RB1. Specifically trimethylates histone H3 'Lys-4' (H3K4me3) in vivo. The activity requires interaction with HSP90alpha. Shows even higher methyltransferase activity on p53/TP53. Monomethylates 'Lys-370' of p53/TP53, leading to decreased DNA-binding activity and subsequent transcriptional regulation activity of p53/TP53. Monomethylates RB1 at 'Lys-860'. The sequence is that of N-lysine methyltransferase SMYD2 (SMYD2) from Bos taurus (Bovine).